A 363-amino-acid chain; its full sequence is Homeobox protein DTH-2 (363 aa).

The homeobox DNA-binding region spans 133–192; sequence RRKRRILFSQAQIYELERRFKQQKYLSAPEREHLANLINLTPTQVKIWFQNHRYKCKRSQ. Residues 189 to 246 form a disordered region; that stretch reads KRSQKDKEKEQQKEKSYHLKKNIVDDKERSPNKQICNASSSDRSTPEEPVAKAKESGL. A compositionally biased stretch (basic and acidic residues) spans 191–219; it reads SQKDKEKEQQKEKSYHLKKNIVDDKERSP. A compositionally biased stretch (polar residues) spans 220–231; sequence NKQICNASSSDR. Positions 232–246 are enriched in basic and acidic residues; the sequence is STPEEPVAKAKESGL.

It belongs to the NK-2 homeobox family. Intestine and unidentified peripheral parenchymal cells. Slightly higher levels in the cephalic region compared to other body regions.

The protein localises to the nucleus. This protein might be involved in determination and/or differentiation of nerve cells in the continuous replacement of neurons in the cephalic region. In Girardia tigrina (Planarian), this protein is Homeobox protein DTH-2 (DTH-2).